A 156-amino-acid chain; its full sequence is Small ribosomal subunit protein uS7 (156 aa).

The protein belongs to the universal ribosomal protein uS7 family. As to quaternary structure, part of the 30S ribosomal subunit. Contacts proteins S9 and S11.

One of the primary rRNA binding proteins, it binds directly to 16S rRNA where it nucleates assembly of the head domain of the 30S subunit. Is located at the subunit interface close to the decoding center, probably blocks exit of the E-site tRNA. This Bartonella quintana (strain Toulouse) (Rochalimaea quintana) protein is Small ribosomal subunit protein uS7.